A 677-amino-acid polypeptide reads, in one-letter code: DNA ligase (677 aa).

NAD(+) contacts are provided by residues 38-42 (DSVYD), 87-88 (SL), and E119. K121 acts as the N6-AMP-lysine intermediate in catalysis. Positions 142, 179, 296, and 320 each coordinate NAD(+). Zn(2+) contacts are provided by C414, C417, C432, and C438. In terms of domain architecture, BRCT spans 595–677 (VVKSEIAGKT…LKLLKSKGVF (83 aa)).

This sequence belongs to the NAD-dependent DNA ligase family. LigA subfamily. Requires Mg(2+) as cofactor. It depends on Mn(2+) as a cofactor.

The catalysed reaction is NAD(+) + (deoxyribonucleotide)n-3'-hydroxyl + 5'-phospho-(deoxyribonucleotide)m = (deoxyribonucleotide)n+m + AMP + beta-nicotinamide D-nucleotide.. Functionally, DNA ligase that catalyzes the formation of phosphodiester linkages between 5'-phosphoryl and 3'-hydroxyl groups in double-stranded DNA using NAD as a coenzyme and as the energy source for the reaction. It is essential for DNA replication and repair of damaged DNA. In Coxiella burnetii (strain CbuG_Q212) (Coxiella burnetii (strain Q212)), this protein is DNA ligase.